Here is a 579-residue protein sequence, read N- to C-terminus: Protein downstream neighbor of son homolog (579 aa).

Disordered regions lie at residues 1–68 (MAEL…RRNP) and 331–379 (FSQP…DESF). Basic and acidic residues predominate over residues 339–348 (DTGKKQKKPE). A compositionally biased stretch (acidic residues) spans 365 to 378 (EADEASDESDEDES).

This sequence belongs to the DONSON family. In terms of assembly, component of the replisome complex.

The protein localises to the nucleus. In terms of biological role, replisome component that maintains genome stability by protecting stalled or damaged replication forks. After the induction of replication stress, required for the stabilization of stalled replication forks, the efficient activation of the intra-S-phase and G/2M cell-cycle checkpoints and the maintenance of genome stability. In Xenopus laevis (African clawed frog), this protein is Protein downstream neighbor of son homolog.